The primary structure comprises 538 residues: Protein NRT1/ PTR FAMILY 5.11 (538 aa).

A run of 2 helical transmembrane segments spans residues 44-64 and 74-94; these read FAYFGIASNLIMYLTGPLGES and AWTGTVAFLPLLGGFLADSYL. The residue at position 99 (Thr-99) is a Phosphothreonine. The next 10 helical transmembrane spans lie at 100–120, 134–154, 175–194, 204–224, 308–328, 342–362, 389–409, 424–444, 463–483, and 507–527; these read IIISSSLYILGLGLLSFSTMI, TIFFFSLYLVAIGQGGYNPCI, SFFNWLMFGNCISILTTRLV, WSLGFGIPSVSMLLSLFLFLL, IPIWITSVVYTIVHAQSPTFF, GLLVPAATLQSFINLSVVVFI, IGTGIFLSILAMVLAALVETK, VWWLIPQYVIFGVSDMFTMVG, ALNLSIYGAGNYLSSFMISVI, and YFYWLLACLGFIGFAFYLWFA.

Belongs to the major facilitator superfamily. Proton-dependent oligopeptide transporter (POT/PTR) (TC 2.A.17) family. Expressed in shoots and roots.

The protein resides in the membrane. The sequence is that of Protein NRT1/ PTR FAMILY 5.11 (NPF5.11) from Arabidopsis thaliana (Mouse-ear cress).